The following is a 264-amino-acid chain: Acyl-[acyl-carrier-protein]--UDP-N-acetylglucosamine O-acyltransferase (264 aa).

Belongs to the transferase hexapeptide repeat family. LpxA subfamily. Homotrimer.

Its subcellular location is the cytoplasm. The catalysed reaction is a (3R)-hydroxyacyl-[ACP] + UDP-N-acetyl-alpha-D-glucosamine = a UDP-3-O-[(3R)-3-hydroxyacyl]-N-acetyl-alpha-D-glucosamine + holo-[ACP]. The protein operates within glycolipid biosynthesis; lipid IV(A) biosynthesis; lipid IV(A) from (3R)-3-hydroxytetradecanoyl-[acyl-carrier-protein] and UDP-N-acetyl-alpha-D-glucosamine: step 1/6. In terms of biological role, involved in the biosynthesis of lipid A, a phosphorylated glycolipid that anchors the lipopolysaccharide to the outer membrane of the cell. The protein is Acyl-[acyl-carrier-protein]--UDP-N-acetylglucosamine O-acyltransferase of Rickettsia prowazekii (strain Madrid E).